Consider the following 126-residue polypeptide: Protein ApaG (126 aa).

One can recognise an ApaG domain in the interval 2 to 126 (TSLEDSIKVE…FRLAVPGMLH (125 aa)).

This chain is Protein ApaG, found in Shewanella sediminis (strain HAW-EB3).